Reading from the N-terminus, the 527-residue chain is Probable T-complex protein 1 subunit beta (527 aa).

Belongs to the TCP-1 chaperonin family. As to quaternary structure, heterooligomeric complex of about 850 to 900 kDa that forms two stacked rings, 12 to 16 nm in diameter.

It localises to the cytoplasm. Functionally, molecular chaperone; assists the folding of proteins upon ATP hydrolysis. Known to play a role, in vitro, in the folding of actin and tubulin. This chain is Probable T-complex protein 1 subunit beta (cct2), found in Schizosaccharomyces pombe (strain 972 / ATCC 24843) (Fission yeast).